The sequence spans 283 residues: MTKSTKILGLIGRAVDYSYSPLIHNTACRLLGLSYHYTVFNIADPSMIPDALRGAKALGIAGFNVTIPYKKSVVPFLDALSAEAASIQAVNTIVNEGGKLTGHNTDIAGFAAPLLPYRESIRGKTLSIFGAGGAALAAIEAFIRFFSPKEILLFVRNPEKASLLLEESGHDKSAPVRILCSDNPEIIRECRVIVNATPIGTRGNNDSPLPLDRELLHPGQIVYDMVYNPLDTPLLLAAQKAGAATISGIEMLIGQAEHSFTLWTGMQMPVKAVKESLLQEIQQ.

Shikimate is bound by residues 18–20 (SYS) and T66. The Proton acceptor role is filled by K70. Residues N91 and D106 each coordinate shikimate. Residues 130–134 (GAGGA) and M225 contribute to the NADP(+) site. Y227 is a binding site for shikimate. G248 contributes to the NADP(+) binding site.

It belongs to the shikimate dehydrogenase family. As to quaternary structure, homodimer.

The enzyme catalyses shikimate + NADP(+) = 3-dehydroshikimate + NADPH + H(+). It participates in metabolic intermediate biosynthesis; chorismate biosynthesis; chorismate from D-erythrose 4-phosphate and phosphoenolpyruvate: step 4/7. In terms of biological role, involved in the biosynthesis of the chorismate, which leads to the biosynthesis of aromatic amino acids. Catalyzes the reversible NADPH linked reduction of 3-dehydroshikimate (DHSA) to yield shikimate (SA). The sequence is that of Shikimate dehydrogenase (NADP(+)) from Pelodictyon phaeoclathratiforme (strain DSM 5477 / BU-1).